The sequence spans 280 residues: Diaminopimelate epimerase (280 aa).

Substrate is bound by residues N12, Q45, and N65. Residue C74 is the Proton donor of the active site. Substrate-binding positions include G75–N76, N163, N196, and E214–R215. C223 acts as the Proton acceptor in catalysis. G224–T225 provides a ligand contact to substrate.

It belongs to the diaminopimelate epimerase family. As to quaternary structure, homodimer.

The protein localises to the cytoplasm. The catalysed reaction is (2S,6S)-2,6-diaminopimelate = meso-2,6-diaminopimelate. It participates in amino-acid biosynthesis; L-lysine biosynthesis via DAP pathway; DL-2,6-diaminopimelate from LL-2,6-diaminopimelate: step 1/1. Functionally, catalyzes the stereoinversion of LL-2,6-diaminopimelate (L,L-DAP) to meso-diaminopimelate (meso-DAP), a precursor of L-lysine and an essential component of the bacterial peptidoglycan. The chain is Diaminopimelate epimerase from Shewanella sediminis (strain HAW-EB3).